We begin with the raw amino-acid sequence, 428 residues long: Light-independent protochlorophyllide reductase subunit N (428 aa).

[4Fe-4S] cluster-binding residues include Cys-29, Cys-54, and Cys-115.

Belongs to the BchN/ChlN family. Protochlorophyllide reductase is composed of three subunits; BchL, BchN and BchB. Forms a heterotetramer of two BchB and two BchN subunits. Requires [4Fe-4S] cluster as cofactor.

The catalysed reaction is chlorophyllide a + oxidized 2[4Fe-4S]-[ferredoxin] + 2 ADP + 2 phosphate = protochlorophyllide a + reduced 2[4Fe-4S]-[ferredoxin] + 2 ATP + 2 H2O. The protein operates within porphyrin-containing compound metabolism; bacteriochlorophyll biosynthesis (light-independent). Component of the dark-operative protochlorophyllide reductase (DPOR) that uses Mg-ATP and reduced ferredoxin to reduce ring D of protochlorophyllide (Pchlide) to form chlorophyllide a (Chlide). This reaction is light-independent. The NB-protein (BchN-BchB) is the catalytic component of the complex. This is Light-independent protochlorophyllide reductase subunit N from Cereibacter sphaeroides (strain ATCC 17025 / ATH 2.4.3) (Rhodobacter sphaeroides).